A 332-amino-acid polypeptide reads, in one-letter code: 2,3-diketo-L-gulonate reductase (332 aa).

The Proton donor role is filled by histidine 44. NAD(+)-binding positions include 168–174 (ITMIDMS), 224–225 (WK), and 304–306 (GHE).

This sequence belongs to the LDH2/MDH2 oxidoreductase family. DlgD subfamily. In terms of assembly, homodimer.

It is found in the cytoplasm. It catalyses the reaction 3-dehydro-L-gulonate + NAD(+) = 2,3-dioxo-L-gulonate + NADH + H(+). The catalysed reaction is 3-dehydro-L-gulonate + NADP(+) = 2,3-dioxo-L-gulonate + NADPH + H(+). Functionally, catalyzes the reduction of 2,3-diketo-L-gulonate in the presence of NADH, to form 3-keto-L-gulonate. The sequence is that of 2,3-diketo-L-gulonate reductase from Citrobacter koseri (strain ATCC BAA-895 / CDC 4225-83 / SGSC4696).